We begin with the raw amino-acid sequence, 193 residues long: Peptidyl-tRNA hydrolase (193 aa).

Tyr-14 is a binding site for tRNA. The active-site Proton acceptor is the His-19. TRNA-binding residues include Phe-64, Asn-66, and Asn-112.

The protein belongs to the PTH family. As to quaternary structure, monomer.

The protein resides in the cytoplasm. The catalysed reaction is an N-acyl-L-alpha-aminoacyl-tRNA + H2O = an N-acyl-L-amino acid + a tRNA + H(+). Its function is as follows. Hydrolyzes ribosome-free peptidyl-tRNAs (with 1 or more amino acids incorporated), which drop off the ribosome during protein synthesis, or as a result of ribosome stalling. In terms of biological role, catalyzes the release of premature peptidyl moieties from peptidyl-tRNA molecules trapped in stalled 50S ribosomal subunits, and thus maintains levels of free tRNAs and 50S ribosomes. The chain is Peptidyl-tRNA hydrolase from Bartonella bacilliformis (strain ATCC 35685 / KC583 / Herrer 020/F12,63).